We begin with the raw amino-acid sequence, 112 residues long: MTAASEKTTRRFTIDCTKPASDSLISPSDLGAFLQQKIKCYTGKKEKLLHINANGNIVEVDVTGGFIGKQGLKWQIGRFLHMKKLRAFIKIFAQGLDGFELRYINVEEGKEE.

The protein belongs to the eukaryotic ribosomal protein eL22 family. Component of the large ribosomal subunit.

The protein localises to the cytoplasm. This Encephalitozoon cuniculi (strain GB-M1) (Microsporidian parasite) protein is Large ribosomal subunit protein eL22 (RPL22).